The following is a 934-amino-acid chain: Complement component C6 (934 aa).

A signal peptide spans 1–21; sequence MTRHLTLCFILLVMLIDKSEA. Cystine bridges form between cysteine 22–cysteine 61, cysteine 24–cysteine 65, cysteine 35–cysteine 73, cysteine 39–cysteine 78, cysteine 82–cysteine 117, cysteine 93–cysteine 127, cysteine 96–cysteine 133, cysteine 140–cysteine 151, cysteine 146–cysteine 164, cysteine 158–cysteine 173, and cysteine 180–cysteine 218. TSP type-1 domains lie at 22–79 and 81–134; these read CFCD…QTCP and NCVL…KLCK. Residues 138–175 enclose the LDL-receptor class A domain; that stretch reads TNCKNKFLCDSGRCIPSKLECNGENDCGDNSDERNCGR. Ca(2+) is bound by residues leucine 156, asparagine 159, glutamate 161, aspartate 163, aspartate 169, and glutamate 170. Residues 176 to 522 form the MACPF domain; that stretch reads TKPVCTRIYT…EYAAKFDPCQ (347 aa). A beta stranded transmembrane segment spans residues 278-290; sequence FFPIPIFHFSEKN. Asparagine 324 carries N-linked (GlcNAc...) asparagine glycosylation. Disulfide bonds link cysteine 399-cysteine 420, cysteine 499-cysteine 623, cysteine 521-cysteine 570, cysteine 523-cysteine 539, cysteine 526-cysteine 541, cysteine 543-cysteine 552, cysteine 577-cysteine 611, cysteine 589-cysteine 601, cysteine 644-cysteine 686, cysteine 672-cysteine 699, cysteine 704-cysteine 746, cysteine 732-cysteine 761, cysteine 773-cysteine 823, cysteine 784-cysteine 801, cysteine 786-cysteine 837, and cysteine 793-cysteine 816. The chain crosses the membrane as a beta stranded span at residues 402–415; that stretch reads YETKKLKFLYMEIH. Positions 523 to 553 constitute an EGF-like domain; it reads CAPCPNNGRPRLSGTECLCVCQSGTYGENCE. One can recognise a TSP type-1 3 domain in the interval 565–612; it reads DGNWGCWSSWSACNAAYRRSRTRECNNPAPQRGGQSCGGKDQQEEDCT. CCP regions lie at residues 611 to 688 and 689 to 765; these read CTVS…RCLP and DRTW…EQAI. Sushi domains follow at residues 642–701 and 702–763; these read SGCS…ECQR and TSCL…TCEQ. Residues 642–934 are C5b-binding domain; the sequence is SGCSQPPLPE…EILNPGRCPD (293 aa). The interval 766-840 is factor I module (FIM) 1; sequence LTKSKDLCPP…FVHSGSCQEG (75 aa). A Kazal-like 1 domain is found at 785–839; the sequence is ICMSPEEDCSAYSEDLCIFDGGSSQYFTSSACKFLAGKCLNNTQSHFVHSGSCQE. Residues asparagine 825, asparagine 855, and asparagine 872 are each glycosylated (N-linked (GlcNAc...) asparagine). Residues 858-934 are factor I module (FIM) 2; it reads KRVSCGYNTC…EILNPGRCPD (77 aa). Cystine bridges form between cysteine 862-cysteine 873, cysteine 867-cysteine 919, cysteine 880-cysteine 897, cysteine 882-cysteine 932, and cysteine 888-cysteine 912. Positions 876–934 constitute a Kazal-like 2 domain; it reads HTSNCVCLLPPQCSKDENQLYCVKIGSSMREKTVNICTLGAVRCANIKVEILNPGRCPD.

This sequence belongs to the complement C6/C7/C8/C9 family. As to quaternary structure, component of the membrane attack complex (MAC), composed of complement C5b, C6, C7, C8A, C8B, C8G and multiple copies of the pore-forming subunit C9. All cysteine residues are assumed to be cross-linked to one another. Individual modules containing an even number of conserved cysteine residues are supposed to have disulfide linkages only within the same module.

It localises to the secreted. The protein resides in the target cell membrane. Its activity is regulated as follows. Membrane attack complex (MAC) assembly is inhibited by CD59, thereby protecting self-cells from damage during complement activation. MAC assembly is also inhibited by clusterin (CLU) chaperones that inhibit polymerization of C9. Its function is as follows. Component of the membrane attack complex (MAC), a multiprotein complex activated by the complement cascade, which inserts into a target cell membrane and forms a pore, leading to target cell membrane rupture and cell lysis. The MAC is initiated by proteolytic cleavage of C5 into complement C5b in response to the classical, alternative, lectin and GZMK complement pathways. The complement pathways consist in a cascade of proteins that leads to phagocytosis and breakdown of pathogens and signaling that strengthens the adaptive immune system. Together with component C5b, involved in MAC complex assembly: complement C5b and C6 associate with the outer leaflet of target cell membrane, reducing the energy for membrane bending. This chain is Complement component C6, found in Mus musculus (Mouse).